Here is a 92-residue protein sequence, read N- to C-terminus: Sec-independent protein translocase protein TatA (92 aa).

Residues 2 to 22 traverse the membrane as a helical segment; sequence IPANFGGTELIILLVIILLLF. A disordered region spans residues 43–92; it reads KGTSGAYEELEEKKGEEEKDEGGKKEAEASGRGEEEQQARAAGEAGRKQG. Residues 53–80 show a composition bias toward basic and acidic residues; it reads EEKKGEEEKDEGGKKEAEASGRGEEEQQ.

Belongs to the TatA/E family. As to quaternary structure, the Tat system comprises two distinct complexes: a TatABC complex, containing multiple copies of TatA, TatB and TatC subunits, and a separate TatA complex, containing only TatA subunits. Substrates initially bind to the TatABC complex, which probably triggers association of the separate TatA complex to form the active translocon.

The protein resides in the cell membrane. In terms of biological role, part of the twin-arginine translocation (Tat) system that transports large folded proteins containing a characteristic twin-arginine motif in their signal peptide across membranes. TatA could form the protein-conducting channel of the Tat system. This chain is Sec-independent protein translocase protein TatA, found in Rubrobacter xylanophilus (strain DSM 9941 / JCM 11954 / NBRC 16129 / PRD-1).